We begin with the raw amino-acid sequence, 161 residues long: Nucleotide-binding protein GM21_0633 (161 aa).

It belongs to the YajQ family.

Its function is as follows. Nucleotide-binding protein. This chain is Nucleotide-binding protein GM21_0633, found in Geobacter sp. (strain M21).